A 348-amino-acid polypeptide reads, in one-letter code: Nicotinate-nucleotide--dimethylbenzimidazole phosphoribosyltransferase (348 aa).

Glu316 serves as the catalytic Proton acceptor.

It belongs to the CobT family.

The enzyme catalyses 5,6-dimethylbenzimidazole + nicotinate beta-D-ribonucleotide = alpha-ribazole 5'-phosphate + nicotinate + H(+). It participates in nucleoside biosynthesis; alpha-ribazole biosynthesis; alpha-ribazole from 5,6-dimethylbenzimidazole: step 1/2. Its function is as follows. Catalyzes the synthesis of alpha-ribazole-5'-phosphate from nicotinate mononucleotide (NAMN) and 5,6-dimethylbenzimidazole (DMB). This Xanthomonas campestris pv. campestris (strain B100) protein is Nicotinate-nucleotide--dimethylbenzimidazole phosphoribosyltransferase.